A 500-amino-acid chain; its full sequence is Cobyric acid synthase (500 aa).

One can recognise a GATase cobBQ-type domain in the interval 255–444 (AIDIAVIRCP…MHDLFHNDAF (190 aa)). Cys-337 acts as the Nucleophile in catalysis. His-436 is a catalytic residue.

The protein belongs to the CobB/CobQ family. CobQ subfamily.

It functions in the pathway cofactor biosynthesis; adenosylcobalamin biosynthesis. In terms of biological role, catalyzes amidations at positions B, D, E, and G on adenosylcobyrinic A,C-diamide. NH(2) groups are provided by glutamine, and one molecule of ATP is hydrogenolyzed for each amidation. In Geobacillus thermodenitrificans (strain NG80-2), this protein is Cobyric acid synthase.